The sequence spans 460 residues: Trigger factor (460 aa).

One can recognise a PPIase FKBP-type domain in the interval 166-245 (DDFLTIDITA…VKAVKERELP (80 aa)). The interval 434-460 (AAEEAAAGEANEEADVVASDDPAAVKF) is disordered. Low complexity predominate over residues 449–460 (VVASDDPAAVKF).

It belongs to the FKBP-type PPIase family. Tig subfamily.

It localises to the cytoplasm. It catalyses the reaction [protein]-peptidylproline (omega=180) = [protein]-peptidylproline (omega=0). Its function is as follows. Involved in protein export. Acts as a chaperone by maintaining the newly synthesized protein in an open conformation. Functions as a peptidyl-prolyl cis-trans isomerase. In Paenarthrobacter aurescens (strain TC1), this protein is Trigger factor.